The following is a 192-amino-acid chain: Probable GTP-binding protein EngB (192 aa).

Residues 22–192 (GRPEIVFVGR…LLASIDTFTQ (171 aa)) form the EngB-type G domain. GTP is bound by residues 30–37 (GRSNVGKS), 57–61 (GKTRL), 75–78 (DLPG), 142–145 (TKWD), and 172–174 (YSS). 2 residues coordinate Mg(2+): serine 37 and threonine 59.

Belongs to the TRAFAC class TrmE-Era-EngA-EngB-Septin-like GTPase superfamily. EngB GTPase family. It depends on Mg(2+) as a cofactor.

Necessary for normal cell division and for the maintenance of normal septation. The protein is Probable GTP-binding protein EngB of Chlorobaculum tepidum (strain ATCC 49652 / DSM 12025 / NBRC 103806 / TLS) (Chlorobium tepidum).